The primary structure comprises 275 residues: MGQKINPHGFRLGITTEWKSRWYADKQYKDYVKEDVAIRKLLATGLERAGIADVEIERTRDRVRVDIHTARPGIVIGRRGTEADRIRADLEKLTGKQVQLNILEVKNPESQAQLVAQGVAEQLSNRVAFRRAMRKAIQSAMRQPNVKGIRVQCSGRLGGAEMSRSEFYREGRVPLHTLRADIDYGLYEAKTTFGRIGVKVWIYKGDIVGGKRELAAAAPASDRPRRERPSGTRPRRSGSAGTTATSTEAGRAATSDAPAAGTAAAAEAPAESTES.

A KH type-2 domain is found at 38-106 (IRKLLATGLE…QVQLNILEVK (69 aa)). Residues 215-275 (AAAAPASDRP…AEAPAESTES (61 aa)) form a disordered region. The segment covering 237–275 (SGSAGTTATSTEAGRAATSDAPAAGTAAAAEAPAESTES) has biased composition (low complexity).

The protein belongs to the universal ribosomal protein uS3 family. Part of the 30S ribosomal subunit. Forms a tight complex with proteins S10 and S14.

Its function is as follows. Binds the lower part of the 30S subunit head. Binds mRNA in the 70S ribosome, positioning it for translation. In Mycolicibacterium smegmatis (strain ATCC 700084 / mc(2)155) (Mycobacterium smegmatis), this protein is Small ribosomal subunit protein uS3.